Consider the following 39-residue polypeptide: Protein MchX (39 aa).

Residues 15–37 (SALSSTLLLSLIMSATLLEYSLS) form a helical membrane-spanning segment.

The protein localises to the cell inner membrane. Its function is as follows. Required for microcin H47 production. Possibly involved in a regulatory loop modulating its own expression and that of MchI and MchB. The protein is Protein MchX (mchX) of Escherichia coli.